The following is a 226-amino-acid chain: Ribonuclease 3 (226 aa).

One can recognise an RNase III domain in the interval 6 to 128; the sequence is INRLQRKLGY…LIGGVFLDSD (123 aa). Position 41 (glutamate 41) interacts with Mg(2+). The active site involves aspartate 45. Aspartate 114 and glutamate 117 together coordinate Mg(2+). The active site involves glutamate 117. The region spanning 155 to 225 is the DRBM domain; that stretch reads DPKTRLQEYL…AEQALKQLEL (71 aa).

This sequence belongs to the ribonuclease III family. As to quaternary structure, homodimer. Requires Mg(2+) as cofactor.

Its subcellular location is the cytoplasm. It catalyses the reaction Endonucleolytic cleavage to 5'-phosphomonoester.. Digests double-stranded RNA. Involved in the processing of primary rRNA transcript to yield the immediate precursors to the large and small rRNAs (23S and 16S). Processes some mRNAs, and tRNAs when they are encoded in the rRNA operon. Processes pre-crRNA and tracrRNA of type II CRISPR loci if present in the organism. The sequence is that of Ribonuclease 3 from Yersinia pseudotuberculosis serotype O:1b (strain IP 31758).